A 1044-amino-acid chain; its full sequence is Phosphatidylinositol 4,5-bisphosphate 3-kinase catalytic subunit delta isoform (1044 aa).

The PI3K-ABD domain occupies 16-105 (ENQSVVVDFL…LPVLRLVARE (90 aa)). One can recognise a PI3K-RBD domain in the interval 187 to 278 (NRALLVNVKF…GLTPHLTMVH (92 aa)). Residues 287-312 (DEQSNPAPQVQKPRAKPPPIPAKKPS) form a disordered region. The C2 PI3K-type domain occupies 319 to 476 (LEQPFRIELI…SAAALLICLP (158 aa)). The region spanning 497–674 (HSECVHVTEE…GLILEAYCRG (178 aa)) is the PIK helical domain. At Y524 the chain carries Phosphotyrosine. The PI3K/PI4K catalytic domain maps to 745-1027 (CVEQCTFMDS…KFNEALRESW (283 aa)). Positions 751-757 (FMDSKMK) are G-loop. A catalytic loop region spans residues 890 to 898 (GIGDRHSDN). The interval 909–935 (HIDFGHFLGNFKTKFGINRERVPFILT) is activation loop. S1039 bears the Phosphoserine; by autocatalysis mark.

The protein belongs to the PI3/PI4-kinase family. Heterodimer of a catalytic subunit PIK3CD and a p85 regulatory subunit (PIK3R1, PIK3R2 or PIK3R3). Interacts with ERAS. Interacts with HRAS. Post-translationally, autophosphorylation on Ser-1039 results in the almost complete inactivation of the lipid kinase activity. As to expression, in humans, the highest levels of expression are seen in peripheral blood mononuclear cells, spleen, and thymus, and low levels of expression in testes, uterus, colon, and small intestine but not in other tissues examined including prostate, heart, brain, and liver. Isoform 2 is expressed in normal thymus, lung and spleen tissues, and is detected at low levels in normal lysates from colon and ovarian biopsies, at elevated levels in lysates from colorectal tumors and is abundantly expressed in some ovarian tumors (at protein level). Both isoform 1 and isoform 2 are widely expressed. Isoform 1 is expressed predominantly in leukocytes.

Its subcellular location is the cytoplasm. The catalysed reaction is a 1,2-diacyl-sn-glycero-3-phospho-(1D-myo-inositol-4,5-bisphosphate) + ATP = a 1,2-diacyl-sn-glycero-3-phospho-(1D-myo-inositol-3,4,5-trisphosphate) + ADP + H(+). It carries out the reaction a 1,2-diacyl-sn-glycero-3-phospho-(1D-myo-inositol) + ATP = a 1,2-diacyl-sn-glycero-3-phospho-(1D-myo-inositol-3-phosphate) + ADP + H(+). The enzyme catalyses 1-octadecanoyl-2-(5Z,8Z,11Z,14Z)-eicosatetraenoyl-sn-glycero-3-phospho-1D-myo-inositol 4,5-bisphosphate + ATP = 1-octadecanoyl-2-(5Z,8Z,11Z,14Z-eicosatetraenoyl)-sn-glycero-3-phospho-(1D-myo-inositol 3,4,5-triphosphate) + ADP + H(+). Its pathway is phospholipid metabolism; phosphatidylinositol phosphate biosynthesis. Its activity is regulated as follows. Activated by growth factors and cytokine receptors through a tyrosine-kinase-dependent mechanism. Activated by RAS. IC87114 inhibits lipid kinase activity and is selective in cells at doses up to 5-10 uM. IC87114 blocks T-cell receptor signaling in naive and memory T-cells and reduces cytokine production by memory T-cells. Phosphoinositide-3-kinase (PI3K) phosphorylates phosphatidylinositol (PI) and its phosphorylated derivatives at position 3 of the inositol ring to produce 3-phosphoinositides. Uses ATP and PtdIns(4,5)P2 (phosphatidylinositol 4,5-bisphosphate) to generate phosphatidylinositol 3,4,5-trisphosphate (PIP3). PIP3 plays a key role by recruiting PH domain-containing proteins to the membrane, including AKT1 and PDPK1, activating signaling cascades involved in cell growth, survival, proliferation, motility and morphology. Mediates immune responses. Plays a role in B-cell development, proliferation, migration, and function. Required for B-cell receptor (BCR) signaling. Mediates B-cell proliferation response to anti-IgM, anti-CD40 and IL4 stimulation. Promotes cytokine production in response to TLR4 and TLR9. Required for antibody class switch mediated by TLR9. Involved in the antigen presentation function of B-cells. Involved in B-cell chemotaxis in response to CXCL13 and sphingosine 1-phosphate (S1P). Required for proliferation, signaling and cytokine production of naive, effector and memory T-cells. Required for T-cell receptor (TCR) signaling. Mediates TCR signaling events at the immune synapse. Activation by TCR leads to antigen-dependent memory T-cell migration and retention to antigenic tissues. Together with PIK3CG participates in T-cell development. Contributes to T-helper cell expansion and differentiation. Required for T-cell migration mediated by homing receptors SELL/CD62L, CCR7 and S1PR1 and antigen dependent recruitment of T-cells. Together with PIK3CG is involved in natural killer (NK) cell development and migration towards the sites of inflammation. Participates in NK cell receptor activation. Plays a role in NK cell maturation and cytokine production. Together with PIK3CG is involved in neutrophil chemotaxis and extravasation. Together with PIK3CG participates in neutrophil respiratory burst. Plays important roles in mast-cell development and mast cell mediated allergic response. Involved in stem cell factor (SCF)-mediated proliferation, adhesion and migration. Required for allergen-IgE-induced degranulation and cytokine release. The lipid kinase activity is required for its biological function. Isoform 2 may be involved in stabilizing total RAS levels, resulting in increased ERK phosphorylation and increased PI3K activity. This chain is Phosphatidylinositol 4,5-bisphosphate 3-kinase catalytic subunit delta isoform (PIK3CD), found in Homo sapiens (Human).